The chain runs to 371 residues: 3-dehydroquinate synthase (371 aa).

NAD(+) contacts are provided by residues 72–77 (DGEEHK), 106–110 (GVVGD), 130–131 (TT), K143, K152, and 170–173 (TLKT). Residues E185, H248, and H265 each coordinate Zn(2+).

The protein belongs to the sugar phosphate cyclases superfamily. Dehydroquinate synthase family. The cofactor is Co(2+). Requires Zn(2+) as cofactor. NAD(+) serves as cofactor.

It localises to the cytoplasm. The enzyme catalyses 7-phospho-2-dehydro-3-deoxy-D-arabino-heptonate = 3-dehydroquinate + phosphate. It functions in the pathway metabolic intermediate biosynthesis; chorismate biosynthesis; chorismate from D-erythrose 4-phosphate and phosphoenolpyruvate: step 2/7. Catalyzes the conversion of 3-deoxy-D-arabino-heptulosonate 7-phosphate (DAHP) to dehydroquinate (DHQ). The polypeptide is 3-dehydroquinate synthase (Pelotomaculum thermopropionicum (strain DSM 13744 / JCM 10971 / SI)).